The chain runs to 311 residues: Malate dehydrogenase (311 aa).

NAD(+)-binding positions include 7–13 and Asp-34; that span reads GAAGGIG. Substrate-binding residues include Arg-81 and Arg-87. NAD(+) is bound by residues Asn-94 and 117 to 119; that span reads ITN. Substrate-binding residues include Asn-119 and Arg-153. His-177 (proton acceptor) is an active-site residue. Met-227 contributes to the NAD(+) binding site.

The protein belongs to the LDH/MDH superfamily. MDH type 1 family. Homodimer.

It catalyses the reaction (S)-malate + NAD(+) = oxaloacetate + NADH + H(+). Its function is as follows. Catalyzes the reversible oxidation of malate to oxaloacetate. This is Malate dehydrogenase from Aeromonas hydrophila subsp. hydrophila (strain ATCC 7966 / DSM 30187 / BCRC 13018 / CCUG 14551 / JCM 1027 / KCTC 2358 / NCIMB 9240 / NCTC 8049).